The chain runs to 211 residues: Leucyl/phenylalanyl-tRNA--protein transferase (211 aa).

The protein belongs to the L/F-transferase family.

It is found in the cytoplasm. The catalysed reaction is N-terminal L-lysyl-[protein] + L-leucyl-tRNA(Leu) = N-terminal L-leucyl-L-lysyl-[protein] + tRNA(Leu) + H(+). The enzyme catalyses N-terminal L-arginyl-[protein] + L-leucyl-tRNA(Leu) = N-terminal L-leucyl-L-arginyl-[protein] + tRNA(Leu) + H(+). It catalyses the reaction L-phenylalanyl-tRNA(Phe) + an N-terminal L-alpha-aminoacyl-[protein] = an N-terminal L-phenylalanyl-L-alpha-aminoacyl-[protein] + tRNA(Phe). In terms of biological role, functions in the N-end rule pathway of protein degradation where it conjugates Leu, Phe and, less efficiently, Met from aminoacyl-tRNAs to the N-termini of proteins containing an N-terminal arginine or lysine. This chain is Leucyl/phenylalanyl-tRNA--protein transferase, found in Flavobacterium psychrophilum (strain ATCC 49511 / DSM 21280 / CIP 103535 / JIP02/86).